The following is a 199-amino-acid chain: uncharacterized protein (199 aa).

A run of 4 helical transmembrane segments spans residues 41 to 61 (LFIP…AFIC), 72 to 92 (SLIC…CSPW), 109 to 129 (TVWV…SIFV), and 145 to 165 (VTYS…LLNL).

It to M.pneumoniae MPN_037.

The protein localises to the cell membrane. This is an uncharacterized protein from Mycoplasma pneumoniae (strain ATCC 29342 / M129 / Subtype 1) (Mycoplasmoides pneumoniae).